Reading from the N-terminus, the 142-residue chain is Glia maturation factor gamma (142 aa).

N-acetylserine is present on Ser2. Residues 4–139 (SLVVCEVDPE…TETWLKEKLA (136 aa)) form the ADF-H domain.

This sequence belongs to the actin-binding proteins ADF family. GMF subfamily.

This is Glia maturation factor gamma (Gmfg) from Mus musculus (Mouse).